A 95-amino-acid polypeptide reads, in one-letter code: Large ribosomal subunit protein bL25 (95 aa).

Residues 1–20 (MSFKFNAEVRSKQGKGASRR) are disordered.

It belongs to the bacterial ribosomal protein bL25 family. In terms of assembly, part of the 50S ribosomal subunit; part of the 5S rRNA/L5/L18/L25 subcomplex. Contacts the 5S rRNA. Binds to the 5S rRNA independently of L5 and L18.

Its function is as follows. This is one of the proteins that binds to the 5S RNA in the ribosome where it forms part of the central protuberance. The sequence is that of Large ribosomal subunit protein bL25 from Histophilus somni (strain 129Pt) (Haemophilus somnus).